A 399-amino-acid polypeptide reads, in one-letter code: MSQRQPQSPNQTLISITNDTETSSSAVSNDTTPKGWTGDNSPGIEALCAIYITYAVIISVGILGNAILIKVFFKTKSMQTVPNIFITSLAFGDLLLLLTCVPVDATHYLAEGWLFGKVGCKVLSFIRLTSVGVSVFTLTILSADRYKAVVKPLERQPSNAILKTCAKAGGIWIMAMIFALPEAIFSNVYTFQDPNRNVTFESCNSYPISERLLQEIHSLLCFLVFYIIPLSIISVYYSLIARTLYKSTLNIPTEEQSHARKQIESRKRIAKTVLVLVALFALCWLPNHLLYLYHSFTYESYAEPSDVPFVVTIFSRVLAFSNSCVNPFALYWLSKTFQKHFKAQLCCFKAEQPEPPLGDTPLNNLTVMGRVPATGSAHVSEISVTLFSGSTAKKGEDKV.

Over 1–41 (MSQRQPQSPNQTLISITNDTETSSSAVSNDTTPKGWTGDNS) the chain is Extracellular. Residues Asn-10, Asn-18, and Asn-29 are each glycosylated (N-linked (GlcNAc...) asparagine). The helical transmembrane segment at 42 to 63 (PGIEALCAIYITYAVIISVGIL) threads the bilayer. The Cytoplasmic portion of the chain corresponds to 64 to 82 (GNAILIKVFFKTKSMQTVP). The chain crosses the membrane as a helical span at residues 83–103 (NIFITSLAFGDLLLLLTCVPV). Residues 104-121 (DATHYLAEGWLFGKVGCK) lie on the Extracellular side of the membrane. Cys-120 and Cys-203 form a disulfide bridge. A helical membrane pass occupies residues 122-143 (VLSFIRLTSVGVSVFTLTILSA). The Cytoplasmic portion of the chain corresponds to 144 to 163 (DRYKAVVKPLERQPSNAILK). Residues 164 to 184 (TCAKAGGIWIMAMIFALPEAI) traverse the membrane as a helical segment. Over 185-220 (FSNVYTFQDPNRNVTFESCNSYPISERLLQEIHSLL) the chain is Extracellular. A helical transmembrane segment spans residues 221–241 (CFLVFYIIPLSIISVYYSLIA). The Cytoplasmic segment spans residues 242–272 (RTLYKSTLNIPTEEQSHARKQIESRKRIAKT). A helical transmembrane segment spans residues 273 to 293 (VLVLVALFALCWLPNHLLYLY). At 294–313 (HSFTYESYAEPSDVPFVVTI) the chain is on the extracellular side. The helical transmembrane segment at 314-333 (FSRVLAFSNSCVNPFALYWL) threads the bilayer. Residues 334–399 (SKTFQKHFKA…STAKKGEDKV (66 aa)) are Cytoplasmic-facing. Residue Cys-347 is the site of S-palmitoyl cysteine attachment.

This sequence belongs to the G-protein coupled receptor 1 family. In terms of assembly, interacts with C6orf89.

The protein resides in the cell membrane. In terms of biological role, role in sperm cell division, maturation, or function. This receptor mediates its action by association with G proteins that activate a phosphatidylinositol-calcium second messenger system. This Rattus norvegicus (Rat) protein is Bombesin receptor subtype-3 (Brs3).